A 514-amino-acid polypeptide reads, in one-letter code: MFRSMGTGTGTKPPAMTTERYEFGPLVGEGNFAKVYLGRHRATGEEVAIKVMDKEKLVRLGATELIKREIAVMQRLRHPNVVRIHEVMANKRRICVVMEYVRGGALYRYFRRGPSGGAAGLREHEARRFFQQLVSAVAYCHSRGVFHRDIKLDNLLVDEQGNLKVADFGLSALADMERREAHLQTVCGTPLFLAPEVFKRRGYDGAKADVWACGVVLYVLLTGRKPFPDEHVSRLYRLIGQNQFQCPPSFSPDLARLVRRLLQPDPDRRITIPEIMEMRWFKRGFKEVTYYIDSNDRLRSLDGLDGEPELYDSDTDTIESSSSSESPTPVAGTPRGMHTSVSAPALSELDRMEDSASLPLPLPLPPRPRMPRPKSLNAFDIIASSPSFDLSGLFEERGERMRFVSGAPVADIIAKLQEIAGMVSFTARTKDCQVSIEATRNGQKGALAISAKVFELTRELVMVQVCKKAGDTAEYRRFCDNELKAGLRGLVVDALPPPVEGGGHGGAAAAAEAE.

The 261-residue stretch at 21 to 281 (YEFGPLVGEG…IPEIMEMRWF (261 aa)) folds into the Protein kinase domain. ATP is bound by residues 27–35 (VGEGNFAKV) and Lys-50. Asp-149 functions as the Proton acceptor in the catalytic mechanism. The segment at 167–196 (DFGLSALADMERREAHLQTVCGTPLFLAPE) is activation loop. Residues 303-340 (GLDGEPELYDSDTDTIESSSSSESPTPVAGTPRGMHTS) form a disordered region. The span at 304-317 (LDGEPELYDSDTDT) shows a compositional bias: acidic residues. Over residues 318 to 329 (IESSSSSESPTP) the composition is skewed to low complexity. In terms of domain architecture, NAF spans 323–395 (SSESPTPVAG…PSFDLSGLFE (73 aa)). The tract at residues 398-427 (GERMRFVSGAPVADIIAKLQEIAGMVSFTA) is PPI.

It belongs to the protein kinase superfamily. CAMK Ser/Thr protein kinase family. SNF1 subfamily. The cofactor is Mn(2+).

The catalysed reaction is L-seryl-[protein] + ATP = O-phospho-L-seryl-[protein] + ADP + H(+). It catalyses the reaction L-threonyl-[protein] + ATP = O-phospho-L-threonyl-[protein] + ADP + H(+). In terms of biological role, CIPK serine-threonine protein kinases interact with CBL proteins. Binding of a CBL protein to the regulatory NAF domain of CIPK protein lead to the activation of the kinase in a calcium-dependent manner. In Oryza sativa subsp. japonica (Rice), this protein is CBL-interacting protein kinase 25 (CIPK25).